The sequence spans 281 residues: 4-deoxy-L-threo-5-hexosulose-uronate ketol-isomerase (281 aa).

4 residues coordinate Zn(2+): His198, His200, Glu205, and His248.

Belongs to the KduI family. Zn(2+) serves as cofactor.

It catalyses the reaction 5-dehydro-4-deoxy-D-glucuronate = 3-deoxy-D-glycero-2,5-hexodiulosonate. It functions in the pathway glycan metabolism; pectin degradation; 2-dehydro-3-deoxy-D-gluconate from pectin: step 4/5. Its function is as follows. Catalyzes the isomerization of 5-dehydro-4-deoxy-D-glucuronate to 3-deoxy-D-glycero-2,5-hexodiulosonate. In Levilactobacillus brevis (strain ATCC 367 / BCRC 12310 / CIP 105137 / JCM 1170 / LMG 11437 / NCIMB 947 / NCTC 947) (Lactobacillus brevis), this protein is 4-deoxy-L-threo-5-hexosulose-uronate ketol-isomerase.